The chain runs to 272 residues: Granaticin polyketide synthase putative ketoacyl reductase 1 (272 aa).

NAD(+) is bound at residue 21-45; the sequence is LVTGATSGIGLAIARRLAALGARTF. Ser155 is a binding site for substrate. The active-site Proton acceptor is the Tyr168.

This sequence belongs to the short-chain dehydrogenases/reductases (SDR) family.

It participates in antibiotic biosynthesis; granaticin biosynthesis. This is Granaticin polyketide synthase putative ketoacyl reductase 1 (gra-orf5) from Streptomyces violaceoruber.